The primary structure comprises 558 residues: MPWWLISLTFIYRLFLCATIRTVEAPDEWWQSTEVAYNMVFGKGHLPWEWRYGLRSVLFPAVVALPFYLLKLLGRDTTWAVWFAPRVLQALVLTLIDVSVFCMGATLDELLAKRELELAEETRQSKTKGFSYFCEVSVSRSRRGICNSISYTALLLSLSNWYMAYCGVRLYGNVIEALLVLLTLQQRRYVPFLLLTGLASAIRVTSAVVLSPLVFRHLANATREHGFIRGLFRIVLTGLIVLVAVLGGVMVLDYCFYGRWVLTPLAFFRFNVLHNLSRFFGEHPWYFYVGPVLVGIVGPHVLFTIAAPLVLWRDTASRAVSRPVLGMLGIGAWTLGFYSLIDHKEMRFVFVVIPLSLITAAFVLVRWSRTSAVVVKMNRLFVLFNIVMIYLMGYVYRRGPLDVMAEVRDGPRINRLDVIATCYTVPGYSYMHKKVNHLGFVDCSIDLDEKTGLPKVTEDIMFRRYPKEYVLWRYDGKHSFNMSDLEESRKASELQSVVMPKSAPHPDAMVMTRAVAKEIEEPFLKRHGYRLYRTFLHSPLTLAPYEDIYIQMWVKVTK.

4 helical membrane passes run 53–73 (GLRSVLFPAVVALPFYLLKLL), 81–101 (VWFAPRVLQALVLTLIDVSVF), 164–184 (AYCGVRLYGNVIEALLVLLTL), and 190–210 (VPFLLLTGLASAIRVTSAVVL). The N-linked (GlcNAc...) asparagine glycan is linked to N220. Residues 234–254 (IVLTGLIVLVAVLGGVMVLDY) form a helical membrane-spanning segment. The N-linked (GlcNAc...) asparagine glycan is linked to N275. Helical transmembrane passes span 292-312 (VLVGIVGPHVLFTIAAPLVLW), 323-343 (PVLGMLGIGAWTLGFYSLIDH), 348-368 (FVFVVIPLSLITAAFVLVRWS), and 372-392 (AVVVKMNRLFVLFNIVMIYLM).

This sequence belongs to the glycosyltransferase 22 family. PIGB subfamily.

It localises to the endoplasmic reticulum membrane. The protein operates within glycolipid biosynthesis; glycosylphosphatidylinositol-anchor biosynthesis. Mannosyltransferase involved in glycosylphosphatidylinositol-anchor biosynthesis. Transfers the third alpha-1,2-mannose to Man2-GlcN-acyl-PI during GPI precursor assembly. The polypeptide is GPI mannosyltransferase 3 (GPI10) (Trypanosoma brucei brucei).